Here is a 404-residue protein sequence, read N- to C-terminus: Metacaspase-1A (404 aa).

A compositionally biased stretch (basic residues) spans 1–10 (MNPHHSHHHS). The disordered stretch occupies residues 1–100 (MNPHHSHHHS…PSDPVSFGQG (100 aa)). The segment covering 24 to 51 (QQQPPSNPYQYNQPSPQPYQGSQPPQNG) has biased composition (low complexity). Catalysis depends on residues His-200 and Cys-256.

Belongs to the peptidase C14B family.

Functionally, involved in cell death (apoptosis). In Aspergillus niger (strain ATCC MYA-4892 / CBS 513.88 / FGSC A1513), this protein is Metacaspase-1A (casA).